We begin with the raw amino-acid sequence, 386 residues long: Patatin-15 (386 aa).

The N-terminal stretch at 1–23 (MATTKSFLILFFMILATTSSTCA) is a signal peptide. Residues 32–229 (LSIDGGGIKG…TVGDPALLSL (198 aa)) form the PNPLA domain. The GXGXXG motif lies at 36–41 (GGGIKG). A GXSXG motif is present at residues 75–79 (GTSTG). The active-site Nucleophile is the Ser77. The N-linked (GlcNAc...) asparagine glycan is linked to Asn115. The Proton acceptor role is filled by Asp215. The short motif at 215–217 (DGG) is the DGA/G element. Positions 321 to 384 (ENALTGTTTE…DRKKLRANKA (64 aa)) form a coiled coil.

The protein belongs to the patatin family. Tuber.

It localises to the vacuole. Probable lipolytic acyl hydrolase (LAH), an activity which is thought to be involved in the response of tubers to pathogens. The sequence is that of Patatin-15 from Solanum tuberosum (Potato).